Reading from the N-terminus, the 235-residue chain is Elongation factor Tu (235 aa).

The region spanning 1-125 (KNMITGAAQM…QVDEYIPAPE (125 aa)) is the tr-type G domain. GTP is bound at residue 47–50 (NKQD).

Belongs to the TRAFAC class translation factor GTPase superfamily. Classic translation factor GTPase family. EF-Tu/EF-1A subfamily. In terms of assembly, monomer.

It localises to the cytoplasm. The enzyme catalyses GTP + H2O = GDP + phosphate + H(+). GTP hydrolase that promotes the GTP-dependent binding of aminoacyl-tRNA to the A-site of ribosomes during protein biosynthesis. This is Elongation factor Tu (tufA) from Leptolyngbya ectocarpi (Phormidium ectocarpi).